Here is a 418-residue protein sequence, read N- to C-terminus: Tyrosine--tRNA ligase (418 aa).

Residue Y34 coordinates L-tyrosine. Positions 39–48 (PTADSLHLGH) match the 'HIGH' region motif. Y169 and Q173 together coordinate L-tyrosine. A 'KMSKS' region motif is present at residues 229 to 233 (KFGKS). K232 contacts ATP. One can recognise an S4 RNA-binding domain in the interval 352–418 (LNIVDLLVTA…GKKKYFVLTY (67 aa)).

The protein belongs to the class-I aminoacyl-tRNA synthetase family. TyrS type 1 subfamily. In terms of assembly, homodimer.

It localises to the cytoplasm. It carries out the reaction tRNA(Tyr) + L-tyrosine + ATP = L-tyrosyl-tRNA(Tyr) + AMP + diphosphate + H(+). Its function is as follows. Catalyzes the attachment of tyrosine to tRNA(Tyr) in a two-step reaction: tyrosine is first activated by ATP to form Tyr-AMP and then transferred to the acceptor end of tRNA(Tyr). This chain is Tyrosine--tRNA ligase, found in Streptococcus gordonii (strain Challis / ATCC 35105 / BCRC 15272 / CH1 / DL1 / V288).